A 544-amino-acid polypeptide reads, in one-letter code: BTB/POZ domain-containing protein At2g13690 (544 aa).

2 disordered regions span residues Ala-34–Ser-66 and Leu-82–Asp-111. Residues Asp-37–Arg-55 show a composition bias toward polar residues. Positions Asp-93–Glu-103 are enriched in low complexity. The region spanning Tyr-142 to Lys-225 is the BTB domain.

The protein operates within protein modification; protein ubiquitination. In terms of biological role, may act as a substrate-specific adapter of an E3 ubiquitin-protein ligase complex (CUL3-RBX1-BTB) which mediates the ubiquitination and subsequent proteasomal degradation of target proteins. The polypeptide is BTB/POZ domain-containing protein At2g13690 (PRL1-IFG) (Arabidopsis thaliana (Mouse-ear cress)).